Consider the following 779-residue polypeptide: Glutathione biosynthesis bifunctional protein GshAB (779 aa).

A glutamate--cysteine ligase region spans residues 1 to 346; sequence MAFSKNILDS…ETANRNQEQA (346 aa). Residues 512–768 form the ATP-grasp domain; the sequence is KKILDQAGIN…LDDKILDALG (257 aa). 539-597 contributes to the ATP binding site; that stretch reads PYYRGRAIVIKPKSTNFGIGITIIKENNRHDFFAQGIAQAFKHEATVLIENFSSGKEYR. Positions 719, 738, and 740 each coordinate Mg(2+). The Mn(2+) site is built by Asp-719, Glu-738, and Asn-740.

In the N-terminal section; belongs to the glutamate--cysteine ligase type 1 family. Type 2 subfamily. Monomer. Requires Mg(2+) as cofactor. The cofactor is Mn(2+).

It carries out the reaction L-cysteine + L-glutamate + ATP = gamma-L-glutamyl-L-cysteine + ADP + phosphate + H(+). The catalysed reaction is gamma-L-glutamyl-L-cysteine + glycine + ATP = glutathione + ADP + phosphate + H(+). The protein operates within sulfur metabolism; glutathione biosynthesis; glutathione from L-cysteine and L-glutamate: step 1/2. Its pathway is sulfur metabolism; glutathione biosynthesis; glutathione from L-cysteine and L-glutamate: step 2/2. In terms of biological role, synthesizes glutathione from L-glutamate and L-cysteine via gamma-L-glutamyl-L-cysteine. This Desulfotalea psychrophila (strain LSv54 / DSM 12343) protein is Glutathione biosynthesis bifunctional protein GshAB.